The primary structure comprises 125 residues: uncharacterized protein (125 aa).

Residues 21-43 (KFSLIALVSFTALAIIVLYHNIS) form a helical membrane-spanning segment.

Its subcellular location is the membrane. This is an uncharacterized protein from Archaeoglobus fulgidus (strain ATCC 49558 / DSM 4304 / JCM 9628 / NBRC 100126 / VC-16).